The chain runs to 194 residues: MESLLAVQGQDFVLTASSSSAVRGITVLKPDDDKSQILNSHNLMLYCGEAGDTTNFAEYIAANISLYTLRHNLNLSPEATASFTRKQLATSLRSRKPYQVNILLAGYETNLGKPELFWLDYLATCVRVPYACQGYSSFYCLSIFDRYYKPDLTIDEAVRIMKLCFDELKKRMPIDFKGFICKVVDKDGIREINI.

The protein belongs to the peptidase T1B family. As to quaternary structure, the 26S proteasome consists of a 20S proteasome core and two 19S regulatory subunits. The 20S proteasome core is composed of 28 subunits that are arranged in four stacked rings, resulting in a barrel-shaped structure. The two end rings are each formed by seven alpha subunits, and the two central rings are each formed by seven beta subunits. The catalytic chamber with the active sites is on the inside of the barrel.

The protein resides in the cytoplasm. Its subcellular location is the nucleus. Functionally, non-catalytic component of the proteasome, a multicatalytic proteinase complex which is characterized by its ability to cleave peptides with Arg, Phe, Tyr, Leu, and Glu adjacent to the leaving group at neutral or slightly basic pH. The proteasome has an ATP-dependent proteolytic activity. The polypeptide is Probable proteasome subunit beta type-4 (Schizosaccharomyces pombe (strain 972 / ATCC 24843) (Fission yeast)).